Reading from the N-terminus, the 213-residue chain is StAR-related lipid transfer protein 5 (213 aa).

In terms of domain architecture, START spans 1-213 (MDPSWATQES…LQKAVRKFHH (213 aa)).

In terms of tissue distribution, expressed in most tissues, with highest levels in liver and in kidney.

Its function is as follows. May be involved in the intracellular transport of sterols or other lipids. May bind cholesterol or other sterols. In Mus musculus (Mouse), this protein is StAR-related lipid transfer protein 5 (Stard5).